Here is a 298-residue protein sequence, read N- to C-terminus: Probable 3-hydroxyacyl-CoA dehydrogenase F54C8.1 (298 aa).

The protein belongs to the 3-hydroxyacyl-CoA dehydrogenase family. As to quaternary structure, homodimer.

It is found in the mitochondrion matrix. It catalyses the reaction a (3S)-3-hydroxyacyl-CoA + NAD(+) = a 3-oxoacyl-CoA + NADH + H(+). It participates in lipid metabolism; fatty acid beta-oxidation. The polypeptide is Probable 3-hydroxyacyl-CoA dehydrogenase F54C8.1 (Caenorhabditis elegans).